A 365-amino-acid chain; its full sequence is MTITGIIAEFNPFHNGHKYLLDQAEGLKIVAMSGNFMQRGEPAIVDKWTRAQMALENGADLVVELPFLVSVQAADFFGQGAVDILDRLGIDSLVFGTEEVRDYQKIADLYTEKGAEMEKFVENLPDSLSYPQKTQSMWKEFAGLDFSGNTPNHVLALAYAKAVAGRNIKLHPIQRQGAGYHSVNKDVDFASATALRQHQKDQDFLERFMPSVALFEQASKVIWEDYFPLLRYQILSNPDLTTIYQVNQEMAVRIKEAIKTAQSVEELVELVTTKRYTKARVRRLLTYILVQARENVLPEAIHVLGFTEKGRQHLKSLKGQVNLVSRIGKEPWDAMTQKADQIYQLGKPSIAEQNFGRVPIRIETN.

Residues 7-20, glycine 96, asparagine 152, and arginine 175 contribute to the ATP site; that span reads IAEFNPFHNGHKYL.

It belongs to the TmcAL family.

It is found in the cytoplasm. The enzyme catalyses cytidine(34) in elongator tRNA(Met) + acetate + ATP = N(4)-acetylcytidine(34) in elongator tRNA(Met) + AMP + diphosphate. Catalyzes the formation of N(4)-acetylcytidine (ac(4)C) at the wobble position of elongator tRNA(Met), using acetate and ATP as substrates. First activates an acetate ion to form acetyladenylate (Ac-AMP) and then transfers the acetyl group to tRNA to form ac(4)C34. This is tRNA(Met) cytidine acetate ligase from Streptococcus pneumoniae (strain 70585).